Consider the following 630-residue polypeptide: Polyphenol oxidase A, chloroplastic (630 aa).

Residues 1 to 25 are disordered; the sequence is MASLCSNSSSTSLKTPFTSSTTCLS. The N-terminal 87 residues, 1-87, are a transit peptide targeting the chloroplast; it reads MASLCSNSSS…ANAIPLAASA (87 aa). Disulfide bonds link Cys-98–Cys-114 and Cys-113–Cys-181. Residues His-180, His-198, His-207, His-328, His-332, and His-370 each coordinate Cu cation. The 2'-(S-cysteinyl)-histidine (Cys-His) cross-link spans 184 to 198; the sequence is CNGGYSIDGKVLQVH.

It belongs to the tyrosinase family. The cofactor is Cu(2+).

It localises to the plastid. Its subcellular location is the chloroplast thylakoid lumen. It catalyses the reaction 2 catechol + O2 = 2 1,2-benzoquinone + 2 H2O. Catalyzes the oxidation of mono- and o-diphenols to o-diquinones. This chain is Polyphenol oxidase A, chloroplastic, found in Solanum lycopersicum (Tomato).